Here is a 246-residue protein sequence, read N- to C-terminus: Large ribosomal subunit protein uL2 (246 aa).

The tract at residues 197–226 (SPYAHPHGGGSHPKGGTPVPKTAPPGQKVG) is disordered.

The protein belongs to the universal ribosomal protein uL2 family. As to quaternary structure, part of the 50S ribosomal subunit. Forms a bridge to the 30S subunit in the 70S ribosome.

Functionally, one of the primary rRNA binding proteins. Required for association of the 30S and 50S subunits to form the 70S ribosome, for tRNA binding and peptide bond formation. It has been suggested to have peptidyltransferase activity; this is somewhat controversial. Makes several contacts with the 16S rRNA in the 70S ribosome. The protein is Large ribosomal subunit protein uL2 of Pyrobaculum islandicum (strain DSM 4184 / JCM 9189 / GEO3).